A 327-amino-acid polypeptide reads, in one-letter code: Ribonucleoside-diphosphate reductase small chain (327 aa).

Residues D70, E101, and H104 each coordinate Fe cation. The active site involves Y108. Fe cation contacts are provided by E164, E198, and H201.

This sequence belongs to the ribonucleoside diphosphate reductase small chain family. Heterotetramer composed of a homodimer of the large subunit (R1) and a homodimer of the small subunit (R2). Larger multisubunit protein complex are also active, composed of (R1)n(R2)n. Requires Fe cation as cofactor.

It carries out the reaction a 2'-deoxyribonucleoside 5'-diphosphate + [thioredoxin]-disulfide + H2O = a ribonucleoside 5'-diphosphate + [thioredoxin]-dithiol. Ribonucleoside-diphosphate reductase holoenzyme provides the precursors necessary for viral DNA synthesis. Allows virus growth in non-dividing cells. Catalyzes the biosynthesis of deoxyribonucleotides from the corresponding ribonucleotides. This chain is Ribonucleoside-diphosphate reductase small chain, found in Ornithodoros (relapsing fever ticks).